The chain runs to 292 residues: uncharacterized protein (292 aa).

A helical transmembrane segment spans residues 13-35 (LFILFIIVVCIYLLPRVAINAFY).

This sequence belongs to the serine esterase family.

It is found in the membrane. This is an uncharacterized protein from Salmonella typhi.